A 191-amino-acid chain; its full sequence is Potassium-transporting ATPase KdpC subunit (191 aa).

Residues 10 to 30 (ITLVFCVFFSVFYILVLWLFA) traverse the membrane as a helical segment.

Belongs to the KdpC family. The system is composed of three essential subunits: KdpA, KdpB and KdpC.

The protein resides in the cell inner membrane. Functionally, part of the high-affinity ATP-driven potassium transport (or Kdp) system, which catalyzes the hydrolysis of ATP coupled with the electrogenic transport of potassium into the cytoplasm. This subunit acts as a catalytic chaperone that increases the ATP-binding affinity of the ATP-hydrolyzing subunit KdpB by the formation of a transient KdpB/KdpC/ATP ternary complex. This chain is Potassium-transporting ATPase KdpC subunit, found in Bacteroides fragilis (strain YCH46).